Here is a 114-residue protein sequence, read N- to C-terminus: Hydrogenase maturation factor HypA (114 aa).

H2 contacts Ni(2+). The Zn(2+) site is built by C73, C76, C90, and C93.

The protein belongs to the HypA/HybF family.

In terms of biological role, involved in the maturation of [NiFe] hydrogenases. Required for nickel insertion into the metal center of the hydrogenase. This chain is Hydrogenase maturation factor HypA, found in Klebsiella pneumoniae subsp. pneumoniae (strain ATCC 700721 / MGH 78578).